Reading from the N-terminus, the 477-residue chain is Transmembrane and coiled-coil domain protein 3 (477 aa).

The disordered stretch occupies residues 1–24 (MPGSDTALTVDRTYSDPGRHHRCK). Phosphoserine is present on S46. 2 coiled-coil regions span residues 63-83 (KVKL…EQIK) and 112-149 (KQVF…NGVT). Residues 234–280 (ASPRAYGGSATIVNKPKYGSDDECSSGTSGSADSNGNQSFGAGGTST) form a disordered region. S253 bears the Phosphoserine mark. A compositionally biased stretch (polar residues) spans 258–280 (SSGTSGSADSNGNQSFGAGGTST). Positions 284-398 (QGKIAKIMEE…KLELHQQEQQ (115 aa)) form a coiled coil. Transmembrane regions (helical) follow at residues 409 to 429 (VLLG…LVCV) and 450 to 470 (FFAV…LCAI).

Belongs to the TEX28 family. As to quaternary structure, may form homodimers and heterodimers with TMCC2 or TMCC3 via the coiled-coil domains. Interacts with ribosomal proteins RPL4 and RPS6.

It is found in the endoplasmic reticulum membrane. This chain is Transmembrane and coiled-coil domain protein 3, found in Mus musculus (Mouse).